A 358-amino-acid polypeptide reads, in one-letter code: Protein UL24 (358 aa).

The protein belongs to the herpesviridae US22 family.

Its subcellular location is the virion tegument. This is Protein UL24 (UL24) from Homo sapiens (Human).